The chain runs to 358 residues: Probable branched-chain-amino-acid aminotransferase (358 aa).

Position 196 is an N6-(pyridoxal phosphate)lysine (Lys-196).

This sequence belongs to the class-IV pyridoxal-phosphate-dependent aminotransferase family. Pyridoxal 5'-phosphate serves as cofactor.

The catalysed reaction is L-leucine + 2-oxoglutarate = 4-methyl-2-oxopentanoate + L-glutamate. It carries out the reaction L-isoleucine + 2-oxoglutarate = (S)-3-methyl-2-oxopentanoate + L-glutamate. The enzyme catalyses L-valine + 2-oxoglutarate = 3-methyl-2-oxobutanoate + L-glutamate. It participates in amino-acid biosynthesis; L-isoleucine biosynthesis; L-isoleucine from 2-oxobutanoate: step 4/4. Its pathway is amino-acid biosynthesis; L-leucine biosynthesis; L-leucine from 3-methyl-2-oxobutanoate: step 4/4. The protein operates within amino-acid biosynthesis; L-valine biosynthesis; L-valine from pyruvate: step 4/4. Functionally, acts on leucine, isoleucine and valine. This Staphylococcus epidermidis (strain ATCC 12228 / FDA PCI 1200) protein is Probable branched-chain-amino-acid aminotransferase (ilvE).